Consider the following 133-residue polypeptide: Protein U17 (133 aa).

Residues phenylalanine 82 to leucine 102 form a helical membrane-spanning segment.

It localises to the membrane. This Homo sapiens (Human) protein is Protein U17 (U17/U16).